The chain runs to 206 residues: MTDTPTKQEIQSKNDNVPGATPVEQKKNNRNDRKRNRRGDSKNLERDSDWQERVVQIRRVSKTVKGGKKMSFRAIVVVGNEKGQVGVGVGKAGDVIGAVRKGVSDGKKNLVRVPLTPNNSIPTLSLGRDGAANVLIRPAAPGTGVIAGGSIRTVLELAGIKNVLAKRLGSKTPLNNARAAMVALSQLRTHKSASKERGISLEQLYS.

The span at 1 to 15 (MTDTPTKQEIQSKND) shows a compositional bias: polar residues. The segment at 1 to 50 (MTDTPTKQEIQSKNDNVPGATPVEQKKNNRNDRKRNRRGDSKNLERDSDW) is disordered. Residues 38–50 (RGDSKNLERDSDW) are compositionally biased toward basic and acidic residues. Positions 50–113 (WQERVVQIRR…SDGKKNLVRV (64 aa)) constitute an S5 DRBM domain.

Belongs to the universal ribosomal protein uS5 family. In terms of assembly, part of the 30S ribosomal subunit. Contacts proteins S4 and S8.

In terms of biological role, with S4 and S12 plays an important role in translational accuracy. Located at the back of the 30S subunit body where it stabilizes the conformation of the head with respect to the body. In Prochlorococcus marinus (strain MIT 9301), this protein is Small ribosomal subunit protein uS5.